The chain runs to 700 residues: Glutamine synthetase (700 aa).

In terms of domain architecture, GS beta-grasp spans 65–155 (YHFTPPGSSP…LPTAFCSYGG (91 aa)). One can recognise a GS catalytic domain in the interval 159-589 (DRDSLLRSME…TMQEMIRKDL (431 aa)). 4 residues coordinate Mg(2+): glutamate 196, glutamate 198, glutamate 267, and glutamate 274. L-glutamate is bound by residues 318 to 319 (NG) and glycine 319. Histidine 323 contributes to the Mg(2+) binding site. The ATP site is built by serine 327 and arginine 435. Arginine 435 lines the L-glutamate pocket. Glutamate 472 contacts Mg(2+).

The protein belongs to the glutamine synthetase family. As to quaternary structure, homohexamer. It depends on Mg(2+) as a cofactor.

Its subcellular location is the cytoplasm. The enzyme catalyses L-glutamate + NH4(+) + ATP = L-glutamine + ADP + phosphate + H(+). The activity of this enzyme is not controlled by adenylation. Catalyzes the ATP-dependent biosynthesis of glutamine from glutamate and ammonia. This chain is Glutamine synthetase, found in Butyrivibrio fibrisolvens.